The sequence spans 384 residues: S-adenosylmethionine synthase (384 aa).

ATP is bound at residue His-15. Residue Asp-17 participates in Mg(2+) binding. Glu-43 lines the K(+) pocket. Residues Glu-56 and Gln-99 each coordinate L-methionine. Positions 99–109 (QSADINQGVDR) are flexible loop. Residues 164–166 (DAK), 230–231 (RF), Asp-239, 245–246 (RK), Ala-262, and Lys-266 each bind ATP. Asp-239 is a binding site for L-methionine. Lys-270 provides a ligand contact to L-methionine.

It belongs to the AdoMet synthase family. In terms of assembly, homotetramer; dimer of dimers. The cofactor is Mg(2+). K(+) serves as cofactor.

The protein resides in the cytoplasm. The enzyme catalyses L-methionine + ATP + H2O = S-adenosyl-L-methionine + phosphate + diphosphate. Its pathway is amino-acid biosynthesis; S-adenosyl-L-methionine biosynthesis; S-adenosyl-L-methionine from L-methionine: step 1/1. Functionally, catalyzes the formation of S-adenosylmethionine (AdoMet) from methionine and ATP. The overall synthetic reaction is composed of two sequential steps, AdoMet formation and the subsequent tripolyphosphate hydrolysis which occurs prior to release of AdoMet from the enzyme. The polypeptide is S-adenosylmethionine synthase (Haemophilus influenzae (strain PittGG)).